We begin with the raw amino-acid sequence, 119 residues long: NAD(P)H-quinone oxidoreductase subunit M (119 aa).

It belongs to the complex I NdhM subunit family. As to quaternary structure, NDH-1 can be composed of about 15 different subunits; different subcomplexes with different compositions have been identified which probably have different functions.

The protein localises to the cellular thylakoid membrane. The enzyme catalyses a plastoquinone + NADH + (n+1) H(+)(in) = a plastoquinol + NAD(+) + n H(+)(out). It catalyses the reaction a plastoquinone + NADPH + (n+1) H(+)(in) = a plastoquinol + NADP(+) + n H(+)(out). In terms of biological role, NDH-1 shuttles electrons from an unknown electron donor, via FMN and iron-sulfur (Fe-S) centers, to quinones in the respiratory and/or the photosynthetic chain. The immediate electron acceptor for the enzyme in this species is believed to be plastoquinone. Couples the redox reaction to proton translocation, and thus conserves the redox energy in a proton gradient. Cyanobacterial NDH-1 also plays a role in inorganic carbon-concentration. The chain is NAD(P)H-quinone oxidoreductase subunit M from Crocosphaera subtropica (strain ATCC 51142 / BH68) (Cyanothece sp. (strain ATCC 51142)).